A 315-amino-acid polypeptide reads, in one-letter code: Methionyl-tRNA formyltransferase (315 aa).

113 to 116 (SILP) contacts (6S)-5,6,7,8-tetrahydrofolate.

Belongs to the Fmt family.

It catalyses the reaction L-methionyl-tRNA(fMet) + (6R)-10-formyltetrahydrofolate = N-formyl-L-methionyl-tRNA(fMet) + (6S)-5,6,7,8-tetrahydrofolate + H(+). Functionally, attaches a formyl group to the free amino group of methionyl-tRNA(fMet). The formyl group appears to play a dual role in the initiator identity of N-formylmethionyl-tRNA by promoting its recognition by IF2 and preventing the misappropriation of this tRNA by the elongation apparatus. The chain is Methionyl-tRNA formyltransferase from Vibrio vulnificus (strain YJ016).